Here is an 84-residue protein sequence, read N- to C-terminus: Exodeoxyribonuclease 7 small subunit (84 aa).

Positions Q65–G84 are disordered.

The protein belongs to the XseB family. In terms of assembly, heterooligomer composed of large and small subunits.

It is found in the cytoplasm. It carries out the reaction Exonucleolytic cleavage in either 5'- to 3'- or 3'- to 5'-direction to yield nucleoside 5'-phosphates.. Functionally, bidirectionally degrades single-stranded DNA into large acid-insoluble oligonucleotides, which are then degraded further into small acid-soluble oligonucleotides. The protein is Exodeoxyribonuclease 7 small subunit of Syntrophobacter fumaroxidans (strain DSM 10017 / MPOB).